Consider the following 1013-residue polypeptide: Probable ubiquitination network signaling protein acrB (1013 aa).

2 disordered regions span residues 1–65 and 105–137; these read MPRS…NSDT and SYGQ…GSNT. Residues 30–65 are compositionally biased toward polar residues; that stretch reads QKSNGQLNGNANGSSAPISGPSSQVDWPSSRSNSDT. 3 helical membrane passes run 158–178, 211–231, and 254–274; these read IAIL…VQFL, LGTM…FMWT, and SGKN…LHLI. The interval 339-367 is disordered; it reads RRSMAKNRAPAPPRTGKRVDTEASAGSQT. Residues 596-782 are a coiled coil; that stretch reads TTLKNSIVNA…REQDQAKVEA (187 aa). A compositionally biased stretch (polar residues) spans 875–899; it reads SPLQHASSPIGPTSSRPTSPTQAPS. Disordered stretches follow at residues 875-902 and 953-1013; these read SPLQ…SYLQ and DLSE…GKGN. Residues 954–965 show a composition bias toward basic and acidic residues; the sequence is LSEKVVDKRRSS. Positions 993–1002 are enriched in gly residues; the sequence is SGSGGSGSGS. Over residues 1003–1013 the composition is skewed to low complexity; the sequence is GSPSSATGKGN.

It belongs to the acrB family.

The protein localises to the membrane. Its function is as follows. Component of the regulatory network controlling carbon source utilization through ubiquitination and deubiquitination involving creA, creB, creC, creD and acrB. Involved in resistance to acriflavine, and required for normal growth on a range of sole carbon sources, including fructose, cellobiose, raffinose, and starch, and reduced utilization of amino acids, including GABA and beta-alanine, as sole carbon and nitrogen sources. The protein is Probable ubiquitination network signaling protein acrB (acrB) of Aspergillus oryzae (strain ATCC 42149 / RIB 40) (Yellow koji mold).